The following is a 246-amino-acid chain: MPASSHQPLDLAKFTLSSPTEIAQHLSNIAKHGHMVTVFANKGKNFILTRLLEVDYQAGVFTFDWGAEEETNTQVLNSERNVFVCSPEGVKTQFVAGQISQVMVDDRPAFQCRLPEQVIKLQRREFFRIQTPLGSPVFCRIGDFNQRSIDLALFDISLGGMSLWLPGIDTPGFDIGQQYLQCSIDLKPFGTLALGIEVRHRLTARMRNGNEAMRIGCSYLNLSAPMETIIQRYVGFLERERRAMVG.

One can recognise a PilZ domain in the interval 122–234; that stretch reads QRREFFRIQT…PMETIIQRYV (113 aa).

This sequence belongs to the YcgR family. As to quaternary structure, monomer. Interacts with the flagellar basal bodies.

It is found in the bacterial flagellum basal body. In terms of biological role, acts as a flagellar brake, regulating swimming and swarming in a bis-(3'-5') cyclic diguanylic acid (c-di-GMP)-dependent manner. Binds 1 c-di-GMP dimer per subunit. Increasing levels of c-di-GMP lead to decreased motility. The sequence is that of Flagellar brake protein YcgR from Chromobacterium violaceum (strain ATCC 12472 / DSM 30191 / JCM 1249 / CCUG 213 / NBRC 12614 / NCIMB 9131 / NCTC 9757 / MK).